A 277-amino-acid polypeptide reads, in one-letter code: 2-dehydro-3-deoxyphosphooctonate aldolase (277 aa).

The protein belongs to the KdsA family.

It localises to the cytoplasm. The enzyme catalyses D-arabinose 5-phosphate + phosphoenolpyruvate + H2O = 3-deoxy-alpha-D-manno-2-octulosonate-8-phosphate + phosphate. The protein operates within carbohydrate biosynthesis; 3-deoxy-D-manno-octulosonate biosynthesis; 3-deoxy-D-manno-octulosonate from D-ribulose 5-phosphate: step 2/3. Its pathway is bacterial outer membrane biogenesis; lipopolysaccharide biosynthesis. This is 2-dehydro-3-deoxyphosphooctonate aldolase from Dichelobacter nodosus (strain VCS1703A).